The primary structure comprises 339 residues: Ketol-acid reductoisomerase (NADP(+)) (339 aa).

A KARI N-terminal Rossmann domain is found at 1–182; that stretch reads MRVYYDRDAD…GGGRSGIIET (182 aa). NADP(+) is bound by residues 24–27, lysine 48, serine 51, threonine 53, and 83–86; these read YGSQ and DELQ. Histidine 108 is a catalytic residue. An NADP(+)-binding site is contributed by glycine 134. The KARI C-terminal knotted domain maps to 183-328; that stretch reads NFKEECETDL…AKLRGMMPWI (146 aa). The Mg(2+) site is built by aspartate 191, glutamate 195, glutamate 227, and glutamate 231. Serine 252 contacts substrate.

This sequence belongs to the ketol-acid reductoisomerase family. Requires Mg(2+) as cofactor.

It catalyses the reaction (2R)-2,3-dihydroxy-3-methylbutanoate + NADP(+) = (2S)-2-acetolactate + NADPH + H(+). The catalysed reaction is (2R,3R)-2,3-dihydroxy-3-methylpentanoate + NADP(+) = (S)-2-ethyl-2-hydroxy-3-oxobutanoate + NADPH + H(+). It functions in the pathway amino-acid biosynthesis; L-isoleucine biosynthesis; L-isoleucine from 2-oxobutanoate: step 2/4. It participates in amino-acid biosynthesis; L-valine biosynthesis; L-valine from pyruvate: step 2/4. In terms of biological role, involved in the biosynthesis of branched-chain amino acids (BCAA). Catalyzes an alkyl-migration followed by a ketol-acid reduction of (S)-2-acetolactate (S2AL) to yield (R)-2,3-dihydroxy-isovalerate. In the isomerase reaction, S2AL is rearranged via a Mg-dependent methyl migration to produce 3-hydroxy-3-methyl-2-ketobutyrate (HMKB). In the reductase reaction, this 2-ketoacid undergoes a metal-dependent reduction by NADPH to yield (R)-2,3-dihydroxy-isovalerate. This chain is Ketol-acid reductoisomerase (NADP(+)), found in Sinorhizobium fredii (strain NBRC 101917 / NGR234).